The following is a 495-amino-acid chain: Aspartyl/glutamyl-tRNA(Asn/Gln) amidotransferase subunit B (495 aa).

The protein belongs to the GatB/GatE family. GatB subfamily. Heterotrimer of A, B and C subunits.

The catalysed reaction is L-glutamyl-tRNA(Gln) + L-glutamine + ATP + H2O = L-glutaminyl-tRNA(Gln) + L-glutamate + ADP + phosphate + H(+). The enzyme catalyses L-aspartyl-tRNA(Asn) + L-glutamine + ATP + H2O = L-asparaginyl-tRNA(Asn) + L-glutamate + ADP + phosphate + 2 H(+). Allows the formation of correctly charged Asn-tRNA(Asn) or Gln-tRNA(Gln) through the transamidation of misacylated Asp-tRNA(Asn) or Glu-tRNA(Gln) in organisms which lack either or both of asparaginyl-tRNA or glutaminyl-tRNA synthetases. The reaction takes place in the presence of glutamine and ATP through an activated phospho-Asp-tRNA(Asn) or phospho-Glu-tRNA(Gln). This is Aspartyl/glutamyl-tRNA(Asn/Gln) amidotransferase subunit B from Methanosarcina acetivorans (strain ATCC 35395 / DSM 2834 / JCM 12185 / C2A).